A 232-amino-acid chain; its full sequence is Triosephosphate isomerase (232 aa).

Residue 6–8 participates in substrate binding; sequence NFK. His-90 (electrophile) is an active-site residue. Glu-159 acts as the Proton acceptor in catalysis. Positions 165 and 195 each coordinate substrate.

This sequence belongs to the triosephosphate isomerase family. Homodimer.

The protein resides in the cytoplasm. It catalyses the reaction D-glyceraldehyde 3-phosphate = dihydroxyacetone phosphate. It functions in the pathway carbohydrate biosynthesis; gluconeogenesis. Its pathway is carbohydrate degradation; glycolysis; D-glyceraldehyde 3-phosphate from glycerone phosphate: step 1/1. Involved in the gluconeogenesis. Catalyzes stereospecifically the conversion of dihydroxyacetone phosphate (DHAP) to D-glyceraldehyde-3-phosphate (G3P). This chain is Triosephosphate isomerase, found in Wolinella succinogenes (strain ATCC 29543 / DSM 1740 / CCUG 13145 / JCM 31913 / LMG 7466 / NCTC 11488 / FDC 602W) (Vibrio succinogenes).